The following is a 146-amino-acid chain: Hemoglobin subunit beta-1/2 (146 aa).

At Val1 the chain carries N-acetylvaline. The Globin domain occupies 2–146; it reads HLTPDEKNAV…VATALAHKYH (145 aa). Ser44 carries the phosphoserine modification. Lys59 is subject to N6-acetyllysine. 2 residues coordinate heme b: His63 and His92. Cys93 carries the S-nitrosocysteine modification. An N6-acetyllysine modification is found at Lys144.

This sequence belongs to the globin family. As to quaternary structure, heterotetramer of two alpha chains and two beta chains. Red blood cells.

Functionally, involved in oxygen transport from the lung to the various peripheral tissues. The polypeptide is Hemoglobin subunit beta-1/2 (HBB) (Otolemur crassicaudatus (Brown greater galago)).